The primary structure comprises 145 residues: D-aminoacyl-tRNA deacylase (145 aa).

The Gly-cisPro motif, important for rejection of L-amino acids signature appears at 137 to 138 (GP).

It belongs to the DTD family. Homodimer.

It localises to the cytoplasm. The enzyme catalyses glycyl-tRNA(Ala) + H2O = tRNA(Ala) + glycine + H(+). The catalysed reaction is a D-aminoacyl-tRNA + H2O = a tRNA + a D-alpha-amino acid + H(+). Its function is as follows. An aminoacyl-tRNA editing enzyme that deacylates mischarged D-aminoacyl-tRNAs. Also deacylates mischarged glycyl-tRNA(Ala), protecting cells against glycine mischarging by AlaRS. Acts via tRNA-based rather than protein-based catalysis; rejects L-amino acids rather than detecting D-amino acids in the active site. By recycling D-aminoacyl-tRNA to D-amino acids and free tRNA molecules, this enzyme counteracts the toxicity associated with the formation of D-aminoacyl-tRNA entities in vivo and helps enforce protein L-homochirality. The chain is D-aminoacyl-tRNA deacylase from Rhodococcus jostii (strain RHA1).